Consider the following 210-residue polypeptide: Small ribosomal subunit protein uS4 (210 aa).

The 72-residue stretch at 99-170 (RRLDNAVFRA…NLEAVVRRGV (72 aa)) folds into the S4 RNA-binding domain.

The protein belongs to the universal ribosomal protein uS4 family. As to quaternary structure, part of the 30S ribosomal subunit. Contacts protein S5. The interaction surface between S4 and S5 is involved in control of translational fidelity.

One of the primary rRNA binding proteins, it binds directly to 16S rRNA where it nucleates assembly of the body of the 30S subunit. In terms of biological role, with S5 and S12 plays an important role in translational accuracy. In Desulfotalea psychrophila (strain LSv54 / DSM 12343), this protein is Small ribosomal subunit protein uS4.